The sequence spans 204 residues: MTKYTFKPKDFKAFNVEGLDARMEALNEYIRPQLHELGEYFSDFFTSQTGETFYPHVAKHARRSVNPPKDTWVAFATNKRGYKMLPHFQIGMFEDQLFVMFGIMHEAKDKATRAKVFERNFKAIQQLPDDYRVCLDHMKPDKPFIKDLTDDDLKEAIQRAINVKKGEFFIARAITPQDKRLKSDKAFIAFLEETFDQFLPFYSA.

Belongs to the UPF0637 family.

The sequence is that of UPF0637 protein SAS1041 from Staphylococcus aureus (strain MSSA476).